An 848-amino-acid polypeptide reads, in one-letter code: Protein SEY1 (848 aa).

The Cytoplasmic segment spans residues 1 to 733 (MNGNFAAVGS…KRGALGGMTQ (733 aa)). The 231-residue stretch at 47–277 (GFNYHLISVF…FVGGVFLPEY (231 aa)) folds into the GB1/RHD3-type G domain. 57–64 (GSQSTGKS) contacts GTP. A helical membrane pass occupies residues 734 to 754 (VPLYFWIALFAFGWNEIWMVI). Over 755 to 757 (RNP) the chain is Lumenal. The chain crosses the membrane as a helical span at residues 758–778 (FLFILLLLSAGGTYVAYNLSL). Residues 779-848 (LGPMMQMTNA…KKKDYDDDGI (70 aa)) are Cytoplasmic-facing. A disordered region spans residues 815–848 (LAMPASSKSSGGEQVRMDTLDSKGKKKDYDDDGI). Residues 829 to 848 (VRMDTLDSKGKKKDYDDDGI) are compositionally biased toward basic and acidic residues.

It belongs to the TRAFAC class dynamin-like GTPase superfamily. GB1/RHD3 GTPase family. RHD3 subfamily.

The protein localises to the endoplasmic reticulum membrane. Its function is as follows. Cooperates with the reticulon proteins and tubule-shaping DP1 family proteins to generate and maintain the structure of the tubular endoplasmic reticulum network. Has GTPase activity, which is required for its function in ER organization. In Pyricularia oryzae (strain 70-15 / ATCC MYA-4617 / FGSC 8958) (Rice blast fungus), this protein is Protein SEY1.